A 299-amino-acid chain; its full sequence is Tyrosine recombinase XerC (299 aa).

A Core-binding (CB) domain is found at 1–85 (MERQLEAYCA…AVRGLYRYLN (85 aa)). Residues 106–285 (RLPKVLDTDR…DFQHLAAVYD (180 aa)) form the Tyr recombinase domain. Catalysis depends on residues Arg146, Lys170, His237, Arg240, and His263. The active-site O-(3'-phospho-DNA)-tyrosine intermediate is Tyr272.

This sequence belongs to the 'phage' integrase family. XerC subfamily. In terms of assembly, forms a cyclic heterotetrameric complex composed of two molecules of XerC and two molecules of XerD.

It localises to the cytoplasm. Functionally, site-specific tyrosine recombinase, which acts by catalyzing the cutting and rejoining of the recombining DNA molecules. The XerC-XerD complex is essential to convert dimers of the bacterial chromosome into monomers to permit their segregation at cell division. It also contributes to the segregational stability of plasmids. The protein is Tyrosine recombinase XerC of Pseudomonas putida (strain W619).